The chain runs to 243 residues: 2-C-methyl-D-erythritol 4-phosphate cytidylyltransferase (243 aa).

It belongs to the IspD/TarI cytidylyltransferase family. IspD subfamily.

The catalysed reaction is 2-C-methyl-D-erythritol 4-phosphate + CTP + H(+) = 4-CDP-2-C-methyl-D-erythritol + diphosphate. The protein operates within isoprenoid biosynthesis; isopentenyl diphosphate biosynthesis via DXP pathway; isopentenyl diphosphate from 1-deoxy-D-xylulose 5-phosphate: step 2/6. In terms of biological role, catalyzes the formation of 4-diphosphocytidyl-2-C-methyl-D-erythritol from CTP and 2-C-methyl-D-erythritol 4-phosphate (MEP). This is 2-C-methyl-D-erythritol 4-phosphate cytidylyltransferase from Colwellia psychrerythraea (strain 34H / ATCC BAA-681) (Vibrio psychroerythus).